Consider the following 143-residue polypeptide: Large ribosomal subunit protein uL11 (143 aa).

This sequence belongs to the universal ribosomal protein uL11 family. In terms of assembly, part of the ribosomal stalk of the 50S ribosomal subunit. Interacts with L10 and the large rRNA to form the base of the stalk. L10 forms an elongated spine to which L12 dimers bind in a sequential fashion forming a multimeric L10(L12)X complex. In terms of processing, one or more lysine residues are methylated.

Forms part of the ribosomal stalk which helps the ribosome interact with GTP-bound translation factors. The sequence is that of Large ribosomal subunit protein uL11 from Aromatoleum aromaticum (strain DSM 19018 / LMG 30748 / EbN1) (Azoarcus sp. (strain EbN1)).